A 278-amino-acid chain; its full sequence is Large ribosomal subunit protein uL2 (278 aa).

2 disordered regions span residues 29–53 (PVKSLTEGKRKTGGRNNKGHVTSRG) and 221–278 (RGVA…KKKR). Over residues 269–278 (IRSRHAKKKR) the composition is skewed to basic residues.

Belongs to the universal ribosomal protein uL2 family. As to quaternary structure, part of the 50S ribosomal subunit. Forms a bridge to the 30S subunit in the 70S ribosome.

One of the primary rRNA binding proteins. Required for association of the 30S and 50S subunits to form the 70S ribosome, for tRNA binding and peptide bond formation. It has been suggested to have peptidyltransferase activity; this is somewhat controversial. Makes several contacts with the 16S rRNA in the 70S ribosome. The chain is Large ribosomal subunit protein uL2 from Erythrobacter litoralis (strain HTCC2594).